We begin with the raw amino-acid sequence, 93 residues long: MSQFSVLNVGFGNIVLVSKIVSIIHSDSASAKRIRNEAKSNNSLIDATQGKKTRSIIVTDSNHLILSNLRVESLTKRIESRDNSIASEEEDLD.

It belongs to the RemA family.

The sequence is that of Putative regulatory protein LA_2599 from Leptospira interrogans serogroup Icterohaemorrhagiae serovar Lai (strain 56601).